Consider the following 256-residue polypeptide: Calsenilin (256 aa).

The interval 1–22 is disordered; it reads MQRTKEAMKASDGSLLGDPGRI. Residue Ser-14 is modified to Phosphoserine. Lys-26 is covalently cross-linked (Glycyl lysine isopeptide (Lys-Gly) (interchain with G-Cter in SUMO1)). S-palmitoyl cysteine attachment occurs at residues Cys-45 and Cys-46. Ser-60 and Ser-63 each carry phosphoserine. The 57-residue stretch at 67-123 folds into the EF-hand 1; degenerate domain; the sequence is LELSTVRHQPEGLDQLQAQTKFTKKELQSLYRGFKNECPTGLVDEDTFKLIYSQFFP. A Glycyl lysine isopeptide (Lys-Gly) (interchain with G-Cter in SUMO1) cross-link involves residue Lys-90. EF-hand domains lie at 126–161, 162–197, and 210–245; these read DATT…LLRG, TVHE…IYDM, and APLE…DENI. The Ca(2+) site is built by Asp-175, Asn-177, Asp-179, Tyr-181, Glu-186, Asp-223, Asn-225, Asp-227, and Glu-234. The interval 243–256 is interaction with KCND2; sequence ENIMSSMQLFENVI.

Belongs to the recoverin family. As to quaternary structure, binds to DNA as a homomultimer. Dimerization is induced by binding to calcium. Interacts with the C-terminus of PSEN1 and PSEN2 and with PSEN2 CTF subunit. Associates with KCN1. Component of heteromultimeric potassium channels. Identified in potassium channel complexes containing KCND1, KCND2, KCND3, KCNIP1, KCNIP2, KCNIP3, KCNIP4, DPP6 and DPP10. Interacts with KCND2 and KCND3. Post-translationally, palmitoylated. Palmitoylation enhances association with the plasma membrane. In terms of processing, proteolytically cleaved by caspase-3. Detected in brain cortex, thalamus, dentate gyrus and cerebellum (at protein level). Expressed in brain. Colocalizes with KCND2 in excitatory neurons including cortical and hippocampal CA1 pyramidal cells.

It localises to the cytoplasm. The protein localises to the cell membrane. The protein resides in the endoplasmic reticulum. Its subcellular location is the golgi apparatus. It is found in the nucleus. Its function is as follows. Calcium-dependent transcriptional repressor that binds to the DRE element of genes including PDYN and FOS. Affinity for DNA is reduced upon binding to calcium and enhanced by binding to magnesium. Seems to be involved in nociception. Regulatory subunit of Kv4/D (Shal)-type voltage-gated rapidly inactivating A-type potassium channels, such as KCND2/Kv4.2 and KCND3/Kv4.3. Modulates channel expression at the cell membrane, gating characteristics, inactivation kinetics and rate of recovery from inactivation in a calcium-dependent and isoform-specific manner. Functionally, may play a role in the regulation of PSEN2 proteolytic processing and apoptosis. Together with PSEN2 involved in modulation of amyloid-beta formation. The sequence is that of Calsenilin (Kcnip3) from Rattus norvegicus (Rat).